Reading from the N-terminus, the 784-residue chain is Toll-like receptor 2 (784 aa).

The signal sequence occupies residues Met1 to Gly20. Residues Ala21–Arg587 are Extracellular-facing. Cys30 and Cys36 are joined by a disulfide. LRR repeat units follow at residues Val54–Asn77, Leu78–Asn101, Leu102–Ala125, Leu126–Asn150, Leu151–Phe175, Leu176–Asn199, Ile200–Ser223, Leu224–Ser250, Val251–Gly278, Ile279–Asn308, Val309–Lys337, Val338–Ser361, Leu362–Phe388, Leu389–Asn414, Leu415–Lys437, Met438–Gln457, Thr458–Gln478, Leu479–Val500, and Leu501–Gln524. N-linked (GlcNAc...) asparagine glycosylation occurs at Asn114. A glycan (N-linked (GlcNAc...) asparagine) is linked at Asn199. A glycan (N-linked (GlcNAc...) asparagine) is linked at Asn248. Cysteines 353 and 382 form a disulfide. Cys432 and Cys454 are disulfide-bonded. The N-linked (GlcNAc...) asparagine glycan is linked to Asn442. The region spanning Leu525–Arg579 is the LRRCT domain. Residues Ala588–Leu608 traverse the membrane as a helical segment. The Cytoplasmic segment spans residues Cys609 to Ser784. The TIR domain maps to Ile639–Ile782. A Glycyl lysine isopeptide (Lys-Gly) (interchain with G-Cter in ubiquitin) cross-link involves residue Lys754. The ATG16L1-binding motif signature appears at Tyr761 to Leu778.

The protein belongs to the Toll-like receptor family. As to quaternary structure, interacts with LY96, TLR1 and TLR6 (via extracellular domain). TLR2 seems to exist in heterodimers with either TLR1 or TLR6 before stimulation by the ligand. The heterodimers form bigger oligomers in response to their corresponding ligands as well as further heterotypic associations with other receptors such as CD14 and/or CD36. Binds MYD88 (via TIR domain). Interacts with TICAM1. Interacts with CNPY3. Interacts with ATG16L1. Interacts with PPP1R11. Interacts with TICAM2. Interacts with TIRAP. Ubiquitinated at Lys-754 by PPP1R11, leading to its degradation. Deubiquitinated by USP2. In terms of processing, glycosylation of Asn-442 is critical for secretion of the N-terminal ectodomain of TLR2.

Its subcellular location is the membrane. It is found in the cytoplasmic vesicle. The protein localises to the phagosome membrane. The protein resides in the membrane raft. Functionally, cooperates with LY96 to mediate the innate immune response to bacterial lipoproteins and other microbial cell wall components. Cooperates with TLR1 or TLR6 to mediate the innate immune response to bacterial lipoproteins or lipopeptides. Acts via MYD88 and TRAF6, leading to NF-kappa-B activation, cytokine secretion and the inflammatory response. May also promote apoptosis in response to lipoproteins. Forms activation clusters composed of several receptors depending on the ligand, these clusters trigger signaling from the cell surface and subsequently are targeted to the Golgi in a lipid-raft dependent pathway. Forms the cluster TLR2:TLR6:CD14:CD36 in response to diacylated lipopeptides and TLR2:TLR1:CD14 in response to triacylated lipopeptides. The sequence is that of Toll-like receptor 2 (TLR2) from Bubalus bubalis (Domestic water buffalo).